Here is a 156-residue protein sequence, read N- to C-terminus: Ribonuclease pancreatic (156 aa).

The signal sequence occupies residues 1–28 (MALEKSLVLLPLLVLILLVLGWVQPSLG). Residues 33–43 (AKKFQRQHVDS) show a composition bias toward basic and acidic residues. The tract at residues 33-53 (AKKFQRQHVDSDSSPSSSSTY) is disordered. Substrate-binding residues include K35 and R38. H40 acts as the Proton acceptor in catalysis. Cystine bridges form between C54–C112, C68–C123, C86–C138, and C93–C100. N62 is a glycosylation site (N-linked (GlcNAc...) asparagine). Substrate-binding positions include 69 to 73 (KPVNT) and K94. N104 is a glycosylation site (N-linked (GlcNAc...) asparagine). R113 lines the substrate pocket. N116 carries an N-linked (GlcNAc...) asparagine glycan. The active-site Proton donor is H147.

The protein belongs to the pancreatic ribonuclease family. In terms of assembly, monomer. Interacts with and forms tight 1:1 complexes with RNH1. Dimerization of two such complexes may occur. Interaction with RNH1 inhibits this protein. Pancreas and other tissues and body fluids (indicating it may have other physiological functions besides its role in digestion).

The protein resides in the secreted. It carries out the reaction an [RNA] containing cytidine + H2O = an [RNA]-3'-cytidine-3'-phosphate + a 5'-hydroxy-ribonucleotide-3'-[RNA].. The catalysed reaction is an [RNA] containing uridine + H2O = an [RNA]-3'-uridine-3'-phosphate + a 5'-hydroxy-ribonucleotide-3'-[RNA].. Its function is as follows. Endonuclease that catalyzes the cleavage of RNA on the 3' side of pyrimidine nucleotides. Acts on single-stranded and double-stranded RNA. The polypeptide is Ribonuclease pancreatic (RNASE1) (Pan troglodytes (Chimpanzee)).